The primary structure comprises 610 residues: UvrABC system protein C (610 aa).

The 79-residue stretch at 16 to 94 (SQPGVYRMYD…IKLYQPRYNV (79 aa)) folds into the GIY-YIG domain. Residues 204–239 (DQVLTQLIARMEKASQDLAFEEAARIRDQIQAVRRV) form the UVR domain.

It belongs to the UvrC family. Interacts with UvrB in an incision complex.

It is found in the cytoplasm. In terms of biological role, the UvrABC repair system catalyzes the recognition and processing of DNA lesions. UvrC both incises the 5' and 3' sides of the lesion. The N-terminal half is responsible for the 3' incision and the C-terminal half is responsible for the 5' incision. This Salmonella typhimurium (strain LT2 / SGSC1412 / ATCC 700720) protein is UvrABC system protein C.